Here is a 439-residue protein sequence, read N- to C-terminus: Ribosomal protein uS12 methylthiotransferase RimO (439 aa).

In terms of domain architecture, MTTase N-terminal spans 5-115 (PKIGFVSLGC…LIEAVHTHAP (111 aa)). Positions 14, 50, 79, 146, 150, and 153 each coordinate [4Fe-4S] cluster. The Radical SAM core domain occupies 132–369 (LTPRHYSYLK…MGLQAQISAD (238 aa)). The region spanning 372–439 (QRFVGTEQQV…ESTEYDLIAD (68 aa)) is the TRAM domain.

It belongs to the methylthiotransferase family. RimO subfamily. It depends on [4Fe-4S] cluster as a cofactor.

The protein localises to the cytoplasm. It carries out the reaction L-aspartate(89)-[ribosomal protein uS12]-hydrogen + (sulfur carrier)-SH + AH2 + 2 S-adenosyl-L-methionine = 3-methylsulfanyl-L-aspartate(89)-[ribosomal protein uS12]-hydrogen + (sulfur carrier)-H + 5'-deoxyadenosine + L-methionine + A + S-adenosyl-L-homocysteine + 2 H(+). Catalyzes the methylthiolation of an aspartic acid residue of ribosomal protein uS12. In Francisella philomiragia subsp. philomiragia (strain ATCC 25017 / CCUG 19701 / FSC 153 / O#319-036), this protein is Ribosomal protein uS12 methylthiotransferase RimO.